The primary structure comprises 200 residues: Small ribosomal subunit protein uS4 (200 aa).

The region spanning 92-155 (SRLDAVVYSL…QNLDIIKESV (64 aa)) is the S4 RNA-binding domain.

The protein belongs to the universal ribosomal protein uS4 family. Part of the 30S ribosomal subunit. Contacts protein S5. The interaction surface between S4 and S5 is involved in control of translational fidelity.

One of the primary rRNA binding proteins, it binds directly to 16S rRNA where it nucleates assembly of the body of the 30S subunit. Its function is as follows. With S5 and S12 plays an important role in translational accuracy. The chain is Small ribosomal subunit protein uS4 from Staphylococcus epidermidis (strain ATCC 35984 / DSM 28319 / BCRC 17069 / CCUG 31568 / BM 3577 / RP62A).